Consider the following 399-residue polypeptide: MIIKPKIRGFICTTAHPAGCEANVREQIAYVKSRGELKNGPKKVLVIGASTGYGLASRINAAFGSGAATIGVFFEKPGSEAKTGSAGWYNSAGFDKAAKEEGLYAKSVNGDAFSNECRQTVIDLIKQDLGQIDMVVYSLASPVRKMPETGEVVRSALKPIGEPYKSVALDTNKDVLVEAVVEPANEQEIADTVKVMGGQDWQLWMDALEEAGVLADNVQAVAYSYIGTDLTWPIYWHGTLGKAKEDLDRAALAIDQKLKAKGGAAYVAVLKSVVTQASSAIPVMPLYISIVFKIMKAQGIHEGCIEQIQRLFATKLYSGTAPDTDEKHRLRLDDWELRDDVQNTCREIWAQINDNNINELTDYLGYKAEFLRLFGFGLQGVDYEADLSGEVKFDVVELV.

NAD(+)-binding positions include 48 to 53, 74 to 75, 111 to 112, and 139 to 140; these read GASTGY, FE, DA, and LA. Tyrosine 225 contacts substrate. Tyrosine 235 functions as the Proton donor in the catalytic mechanism. NAD(+) is bound by residues lysine 244 and 273 to 275; that span reads VVT.

It belongs to the TER reductase family. In terms of assembly, monomer.

It catalyses the reaction a 2,3-saturated acyl-[ACP] + NAD(+) = a (2E)-enoyl-[ACP] + NADH + H(+). Its pathway is lipid metabolism; fatty acid biosynthesis. Involved in the final reduction of the elongation cycle of fatty acid synthesis (FAS II). Catalyzes the reduction of a carbon-carbon double bond in an enoyl moiety that is covalently linked to an acyl carrier protein (ACP). The polypeptide is Enoyl-[acyl-carrier-protein] reductase [NADH] (Serratia proteamaculans (strain 568)).